A 158-amino-acid polypeptide reads, in one-letter code: Transcription elongation factor GreA (158 aa).

Residues 4–70 (QKQYPMTQEG…IEQDIQRIEH (67 aa)) adopt a coiled-coil conformation.

It belongs to the GreA/GreB family.

Necessary for efficient RNA polymerase transcription elongation past template-encoded arresting sites. The arresting sites in DNA have the property of trapping a certain fraction of elongating RNA polymerases that pass through, resulting in locked ternary complexes. Cleavage of the nascent transcript by cleavage factors such as GreA or GreB allows the resumption of elongation from the new 3'terminus. GreA releases sequences of 2 to 3 nucleotides. The sequence is that of Transcription elongation factor GreA from Staphylococcus aureus (strain Mu3 / ATCC 700698).